A 231-amino-acid chain; its full sequence is Ribose-5-phosphate isomerase A (231 aa).

Substrate-binding positions include 31–34 (SGST), 87–90 (DGAD), and 100–103 (KGGG). Residue glutamate 109 is the Proton acceptor of the active site. Residue lysine 127 coordinates substrate.

It belongs to the ribose 5-phosphate isomerase family. Homodimer.

It catalyses the reaction aldehydo-D-ribose 5-phosphate = D-ribulose 5-phosphate. It participates in carbohydrate degradation; pentose phosphate pathway; D-ribose 5-phosphate from D-ribulose 5-phosphate (non-oxidative stage): step 1/1. Catalyzes the reversible conversion of ribose-5-phosphate to ribulose 5-phosphate. In Chlamydia pneumoniae (Chlamydophila pneumoniae), this protein is Ribose-5-phosphate isomerase A.